Consider the following 509-residue polypeptide: Scavenger receptor class B member 1 (509 aa).

Over 1-11 (MGSRSRARQVA) the chain is Cytoplasmic. Residues 12–32 (AALGFVGLLLAALGAVMIVMV) traverse the membrane as a helical segment. The Extracellular portion of the chain corresponds to 33-439 (PSIIKQQVLK…FYTQLVLMPK (407 aa)). 8 N-linked (GlcNAc...) asparagine glycosylation sites follow: Asn102, Asn108, Asn173, Asn212, Asn255, Asn310, Asn330, and Asn383. The cysteines at positions 251 and 384 are disulfide-linked. The helical transmembrane segment at 440-460 (VLHYAQYVLLALGCVLLFIPI) threads the bilayer. Over 461–509 (VYQIRSQEKCYLFWSSSKKGSKDKEAIQAYSESLMTPAPKGTVLQEARL) the chain is Cytoplasmic.

This sequence belongs to the CD36 family. In terms of assembly, the C-terminal region binds to PDZK1. N-glycosylated. In terms of processing, the six cysteines of the extracellular domain are all involved in intramolecular disulfide bonds.

It is found in the cell membrane. The protein localises to the membrane. Its subcellular location is the caveola. In terms of biological role, receptor for different ligands such as phospholipids, cholesterol ester, lipoproteins, phosphatidylserine and apoptotic cells. Receptor for HDL, mediating selective uptake of cholesteryl ether and HDL-dependent cholesterol efflux. Also facilitates the flux of free and esterified cholesterol between the cell surface and apoB-containing lipoproteins and modified lipoproteins, although less efficiently than HDL. May be involved in the phagocytosis of apoptotic cells, via its phosphatidylserine binding activity. The polypeptide is Scavenger receptor class B member 1 (SCARB1) (Sus scrofa (Pig)).